A 51-amino-acid chain; its full sequence is Large ribosomal subunit protein eL39y (51 aa).

Residues methionine 1–arginine 21 form a disordered region. Residues phenylalanine 7–glutamine 19 show a composition bias toward basic residues.

It belongs to the eukaryotic ribosomal protein eL39 family.

The chain is Large ribosomal subunit protein eL39y (RPL39B) from Arabidopsis thaliana (Mouse-ear cress).